Reading from the N-terminus, the 216-residue chain is Adenylate kinase (216 aa).

10-15 (GAGKGT) is an ATP binding site. The tract at residues 30-59 (STGDMLRAAVNAGTEVGKRAKAVMDAGKLV) is NMP. AMP contacts are provided by residues threonine 31, arginine 36, 57-59 (KLV), 85-88 (GFPR), and glutamine 92. Positions 126 to 163 (GRYTCAQCGTVYHDTDKVPVEEGVCDKCGSTHFKRRPD) are LID. An ATP-binding site is contributed by arginine 127. The Zn(2+) site is built by cysteine 130 and cysteine 133. 136–137 (VY) is an ATP binding site. Residues cysteine 150 and cysteine 153 each contribute to the Zn(2+) site. Arginine 160 and arginine 172 together coordinate AMP. Position 200 (alanine 200) interacts with ATP.

This sequence belongs to the adenylate kinase family. Monomer.

Its subcellular location is the cytoplasm. It carries out the reaction AMP + ATP = 2 ADP. Its pathway is purine metabolism; AMP biosynthesis via salvage pathway; AMP from ADP: step 1/1. Catalyzes the reversible transfer of the terminal phosphate group between ATP and AMP. Plays an important role in cellular energy homeostasis and in adenine nucleotide metabolism. The sequence is that of Adenylate kinase from Rhizobium etli (strain ATCC 51251 / DSM 11541 / JCM 21823 / NBRC 15573 / CFN 42).